The primary structure comprises 772 residues: Semaphorin-3A (772 aa).

An N-terminal signal peptide occupies residues 1-20; it reads MGWFTGIACLFWGILLTARA. One can recognise a Sema domain in the interval 31-514; the sequence is RLKLSYKEML…STAGVAQLPL (484 aa). Residue asparagine 53 is glycosylated (N-linked (GlcNAc...) asparagine). A disulfide bridge links cysteine 103 with cysteine 114. Asparagine 125 carries N-linked (GlcNAc...) asparagine glycosylation. 4 cysteine pairs are disulfide-bonded: cysteine 132–cysteine 141, cysteine 269–cysteine 381, cysteine 293–cysteine 341, and cysteine 517–cysteine 535. The region spanning 577 to 665 is the Ig-like C2-type domain; it reads HGHSLEERII…GFMQTLLKVT (89 aa). Residue asparagine 591 is glycosylated (N-linked (GlcNAc...) asparagine). Cysteine 650 and cysteine 723 are oxidised to a cystine. A compositionally biased stretch (basic and acidic residues) spans 677–691; the sequence is LLHKDDDGDGSKTKE. Disordered regions lie at residues 677–698 and 729–772; these read LLHK…SMTP and RDRK…PRSV. Positions 729–738 are enriched in basic residues; it reads RDRKQRRQRP. The segment covering 750–772 has biased composition (basic and acidic residues); it reads HMQESKKGRNRRTHEFERAPRSV.

Belongs to the semaphorin family. Interacts with PLXND1. In terms of tissue distribution, expressed in the dorsal root ganglia.

Its subcellular location is the secreted. Functionally, may be involved in guiding growing axons towards their targets by forming a molecular boundary that instructs axons to engage in the formation of specific nerve tracts. Binds to neuropilin. Involved in the development of the olfactory system and in neuronal control of puberty. The chain is Semaphorin-3A (Sema3a) from Rattus norvegicus (Rat).